We begin with the raw amino-acid sequence, 610 residues long: Sodium-coupled monocarboxylate transporter 1 (610 aa).

At 1 to 9 (MDTPRGIGT) the chain is on the extracellular side. Residues 10–30 (FVVWDYVVFAGMLVISAAIGI) traverse the membrane as a helical segment. The Cytoplasmic portion of the chain corresponds to 31–51 (YYAFAGGGQQTSKDFLMGGRR). A helical transmembrane segment spans residues 52–72 (MTAVPVALSLTASFMSAVTVL). The Extracellular portion of the chain corresponds to 73-83 (GTPSEVYRFGA). Residues 84 to 104 (IFSIFAFTYFFVVVISAEVFL) form a helical membrane-spanning segment. At 105–132 (PVFYKLGITSTYEYLELRFNKCVRLCGT) the chain is on the cytoplasmic side. The helical transmembrane segment at 133–153 (VLFIVQTILYTGIVIYAPALA) threads the bilayer. The Extracellular portion of the chain corresponds to 154–161 (LNQVTGFD). The helical transmembrane segment at 162-182 (LWGAVVATGVVCTFYCTLGGL) threads the bilayer. Residues 183 to 189 (KAVIWTD) are Cytoplasmic-facing. A helical membrane pass occupies residues 190–210 (VFQVGIMVAGFASVIIQAVVM). The Extracellular portion of the chain corresponds to 211–239 (QGGISTILNDAYDGGRLNFWNFNPNPLQR). The chain crosses the membrane as a helical span at residues 240–260 (HTFWTIIIGGTFTWTSIYGVN). Residues 261-279 (QSQVQRYISCKSRFQAKLS) are Cytoplasmic-facing. A helical membrane pass occupies residues 280–300 (LYINLVGLWAILTCSVFCGLA). Residues 301 to 336 (LYSRYHDCDPWTAKKVSAPDQLMPYLVLDILQDYPG) lie on the Extracellular side of the membrane. Residues 337 to 359 (LPGLFVACAYSGTLSTVSSSINA) traverse the membrane as a helical segment. Topologically, residues 360 to 389 (LAAVTVEDLIKPYFRSLSERSLSWISQGMS) are cytoplasmic. The helical transmembrane segment at 390 to 410 (VVYGALCIGMAALASLMGALL) threads the bilayer. Residues 411-415 (QAALS) lie on the Extracellular side of the membrane. A helical transmembrane segment spans residues 416-436 (VFGMVGGPLMGLFALGILVPF). The Cytoplasmic segment spans residues 437–439 (ANS). A helical membrane pass occupies residues 440-460 (IGALVGLMAGFAISLWVGIGA). Residues 461-518 (QIYPPLPERTLPLHLDIQGCNSTYNETNLMTTTEMPFTTSVFQIYNVQRTPLMDNWYS) lie on the Extracellular side of the membrane. A glycan (N-linked (GlcNAc...) asparagine) is linked at Asn-485. A helical membrane pass occupies residues 519–539 (LSYLYFSTVGTLVTLLVGILV). Over 540-610 (SLSTGGRKQN…QSGKSNGTRL (71 aa)) the chain is Cytoplasmic. The tract at residues 585 to 610 (GGTDNPAFNHIELNSDQSGKSNGTRL) is disordered. The span at 596 to 610 (ELNSDQSGKSNGTRL) shows a compositional bias: polar residues. The PDZ-binding motif lies at 608 to 610 (TRL).

The protein belongs to the sodium:solute symporter (SSF) (TC 2.A.21) family. Interacts (via PDZ-binding motif) with PDZK1 (via PDZ domains 1 and 3); interaction increases nicotinate transport activity of SLC5A8. As to expression, expressed in normal thyroid, localized at the apical pole of thyroid cells facing the colloid lumen, but expression profoundly decreased in thyroid carcinomas. Expressed in normal colon but absent in colon aberrant crypt foci and colon cancers. Present in normal kidney cortex, brain, prostate, gastric mucosa and breast tissue but was significantly down-regulated in primary gliomas, gastric cancer, prostate tumors and breast tumors.

It is found in the apical cell membrane. It catalyses the reaction (S)-lactate(out) + 2 Na(+)(out) = (S)-lactate(in) + 2 Na(+)(in). The catalysed reaction is propanoate(out) + 2 Na(+)(out) = propanoate(in) + 2 Na(+)(in). The enzyme catalyses pyruvate(out) + 2 Na(+)(out) = pyruvate(in) + 2 Na(+)(in). It carries out the reaction acetate(out) + 2 Na(+)(out) = acetate(in) + 2 Na(+)(in). It catalyses the reaction butanoate(out) + 2 Na(+)(out) = butanoate(in) + 2 Na(+)(in). The catalysed reaction is nicotinate(out) + 2 Na(+)(out) = nicotinate(in) + 2 Na(+)(in). The enzyme catalyses (R)-3-hydroxybutanoate(out) + 2 Na(+)(out) = (R)-3-hydroxybutanoate(in) + 2 Na(+)(in). It carries out the reaction acetoacetate(out) + 2 Na(+)(out) = acetoacetate(in) + 2 Na(+)(in). It catalyses the reaction 4-methyl-2-oxopentanoate(out) + 2 Na(+)(out) = 4-methyl-2-oxopentanoate(in) + 2 Na(+)(in). The catalysed reaction is 5-oxo-L-proline(out) + 2 Na(+)(out) = 5-oxo-L-proline(in) + 2 Na(+)(in). The enzyme catalyses iodide(out) = iodide(in). It carries out the reaction chloride(in) = chloride(out). It catalyses the reaction nitrate(in) = nitrate(out). The catalysed reaction is bromide(in) = bromide(out). Its activity is regulated as follows. Increase of iodide influx inhibited by addition of perchlorate (NaClO(4)), a competitive inhibitor of iodide uptake catalyzed by sodium iodide symporter (NIS). Cotransport of monocarboxylates and nicotinate strongly inhibited by probenecid, nonsteroid anti-inflammatory drugs (ibuprofen, fenoprofen, ketprofen, naproxen) in a Na(+)-dependent manner or by prolonged exposure to external concentrations of monocarboxylates. Acts as an electrogenic sodium (Na(+)) and chloride (Cl-)-dependent sodium-coupled solute transporter, including transport of monocarboxylates (short-chain fatty acids including L-lactate, D-lactate, pyruvate, acetate, propionate, valerate and butyrate), mocarboxylate drugs (nicotinate, benzoate, salicylate and 5-aminosalicylate) and ketone bodies (beta-D-hydroxybutyrate, acetoacetate and alpha-ketoisocaproate), with a Na(+):substrate stoichiometry of between 4:1 and 2:1. Catalyzes passive carrier mediated diffusion of iodide. Mediates iodide transport from the thyrocyte into the colloid lumen through the apical membrane. May be responsible for the absorption of D-lactate and monocarboxylate drugs from the intestinal tract. Acts as a tumor suppressor, suppressing colony formation in colon cancer, prostate cancer and glioma cell lines. May play a critical role in the entry of L-lactate and ketone bodies into neurons by a process driven by an electrochemical Na(+) gradient and hence contribute to the maintenance of the energy status and function of neurons. Mediates sodium-coupled electrogenic transport of pyroglutamate (5-oxo-L-proline). Can mediate the transport of chloride, bromide, iodide and nitrate ions when the external concentration of sodium ions is reduced. This is Sodium-coupled monocarboxylate transporter 1 from Homo sapiens (Human).